A 464-amino-acid polypeptide reads, in one-letter code: Maturase K (464 aa).

It belongs to the intron maturase 2 family. MatK subfamily.

The protein localises to the plastid. The protein resides in the chloroplast. Its function is as follows. Usually encoded in the trnK tRNA gene intron. Probably assists in splicing its own and other chloroplast group II introns. This chain is Maturase K, found in Castanea crenata (Japanese chestnut).